A 364-amino-acid chain; its full sequence is MKFVDEAYIDIAAGDGGSGCVSFSHEKYKEFGGPNGGDGGRGGHVYAVADINLNTLVDFRFSRRHEARNGGHGMGSDMFGAKGDDIILKMPVGTILTDAETGEVLFELLVPGEQILIAKGGDGGFGNLRFKSSTNRAPRSKTPGWPGDRKSLKLELKVLADVGLLGMPNAGKSTFISAVSNARPRIADYPFTTLHPNLGVVRVGPEQSFVVADLPGLIEGASEGAGLGHLFLRHLQRTRLLLHIVDLAPFDEGVDPVAQAKAIVGELKKYDEALYKKPRWLVLNKLDMIDADERAAVVKDFVKRFKFKGPVFEISALTREGCEQLVKTIYQHVKKVQKSEQPEEEVDPRFIELPPEPAKPASSD.

The Obg domain maps to 1–159; sequence MKFVDEAYID…KSLKLELKVL (159 aa). Positions 160–334 constitute an OBG-type G domain; the sequence is ADVGLLGMPN…LVKTIYQHVK (175 aa). Residues 166–173, 191–195, 213–216, 284–287, and 315–317 each bind GTP; these read GMPNAGKS, FTTLH, DLPG, NKLD, and SAL. 2 residues coordinate Mg(2+): Ser-173 and Thr-193. Residues 337–364 are disordered; the sequence is QKSEQPEEEVDPRFIELPPEPAKPASSD.

It belongs to the TRAFAC class OBG-HflX-like GTPase superfamily. OBG GTPase family. Monomer. It depends on Mg(2+) as a cofactor.

It localises to the cytoplasm. In terms of biological role, an essential GTPase which binds GTP, GDP and possibly (p)ppGpp with moderate affinity, with high nucleotide exchange rates and a fairly low GTP hydrolysis rate. Plays a role in control of the cell cycle, stress response, ribosome biogenesis and in those bacteria that undergo differentiation, in morphogenesis control. The chain is GTPase Obg from Polaromonas naphthalenivorans (strain CJ2).